Reading from the N-terminus, the 155-residue chain is Large ribosomal subunit protein eL24 (155 aa).

Residues 87–155 are disordered; it reads LELIKERRSQ…SFQKVKATSR (69 aa). Over residues 89–129 the composition is skewed to basic and acidic residues; the sequence is LIKERRSQKPSDRKAARDSKLAKDKEAKKAAKAARKAEKAK. Over residues 130–143 the composition is skewed to low complexity; that stretch reads AVASGASVVSKQQA.

Belongs to the eukaryotic ribosomal protein eL24 family. As to quaternary structure, component of the large ribosomal subunit. Mature ribosomes consist of a small (40S) and a large (60S) subunit. The 40S subunit contains about 32 different proteins and 1 molecule of RNA (18S). The 60S subunit contains 45 different proteins and 3 molecules of RNA (25S, 5.8S and 5S).

It localises to the cytoplasm. Component of the ribosome, a large ribonucleoprotein complex responsible for the synthesis of proteins in the cell. The small ribosomal subunit (SSU) binds messenger RNAs (mRNAs) and translates the encoded message by selecting cognate aminoacyl-transfer RNA (tRNA) molecules. The large subunit (LSU) contains the ribosomal catalytic site termed the peptidyl transferase center (PTC), which catalyzes the formation of peptide bonds, thereby polymerizing the amino acids delivered by tRNAs into a polypeptide chain. The nascent polypeptides leave the ribosome through a tunnel in the LSU and interact with protein factors that function in enzymatic processing, targeting, and the membrane insertion of nascent chains at the exit of the ribosomal tunnel. This is Large ribosomal subunit protein eL24 from Candida albicans (strain SC5314 / ATCC MYA-2876) (Yeast).